We begin with the raw amino-acid sequence, 874 residues long: Alanine--tRNA ligase (874 aa).

H562, H566, C664, and H668 together coordinate Zn(2+).

This sequence belongs to the class-II aminoacyl-tRNA synthetase family. Zn(2+) serves as cofactor.

The protein resides in the cytoplasm. It carries out the reaction tRNA(Ala) + L-alanine + ATP = L-alanyl-tRNA(Ala) + AMP + diphosphate. Catalyzes the attachment of alanine to tRNA(Ala) in a two-step reaction: alanine is first activated by ATP to form Ala-AMP and then transferred to the acceptor end of tRNA(Ala). Also edits incorrectly charged Ser-tRNA(Ala) and Gly-tRNA(Ala) via its editing domain. This is Alanine--tRNA ligase from Neisseria meningitidis serogroup C / serotype 2a (strain ATCC 700532 / DSM 15464 / FAM18).